A 375-amino-acid polypeptide reads, in one-letter code: tRNA-specific 2-thiouridylase MnmA (375 aa).

ATP is bound by residues 8–15 (GLSGGVDS) and Met34. An interaction with target base in tRNA region spans residues 104 to 106 (NPD). Residue Cys109 is the Nucleophile of the active site. An intrachain disulfide couples Cys109 to Cys208. Gly134 serves as a coordination point for ATP. Positions 158-160 (KDQ) are interaction with tRNA. The active-site Cysteine persulfide intermediate is the Cys208. Residues 321–322 (RY) are interaction with tRNA.

Belongs to the MnmA/TRMU family.

The protein resides in the cytoplasm. It carries out the reaction S-sulfanyl-L-cysteinyl-[protein] + uridine(34) in tRNA + AH2 + ATP = 2-thiouridine(34) in tRNA + L-cysteinyl-[protein] + A + AMP + diphosphate + H(+). Functionally, catalyzes the 2-thiolation of uridine at the wobble position (U34) of tRNA, leading to the formation of s(2)U34. This is tRNA-specific 2-thiouridylase MnmA from Mycoplasma capricolum subsp. capricolum (strain California kid / ATCC 27343 / NCTC 10154).